Here is a 104-residue protein sequence, read N- to C-terminus: Large ribosomal subunit protein uL24 (104 aa).

Belongs to the universal ribosomal protein uL24 family. As to quaternary structure, part of the 50S ribosomal subunit. A methylated and unmethylated form are thought to exist.

Its function is as follows. One of two assembly initiator proteins, it binds directly to the 5'-end of the 23S rRNA, where it nucleates assembly of the 50S subunit. In terms of biological role, one of the proteins that surrounds the polypeptide exit tunnel on the outside of the subunit. The sequence is that of Large ribosomal subunit protein uL24 from Rhodopseudomonas palustris (strain ATCC BAA-98 / CGA009).